Reading from the N-terminus, the 473-residue chain is Sulfate adenylyltransferase subunit 1 (473 aa).

The tr-type G domain maps to K19–E238. Positions G28–S35 are G1. G28 to S35 serves as a coordination point for GTP. The interval G86 to D90 is G2. Residues D107–G110 form a G3 region. GTP is bound by residues D107–H111 and N162–D165. Residues N162–D165 form a G4 region. Residues S200–L202 form a G5 region.

It belongs to the TRAFAC class translation factor GTPase superfamily. Classic translation factor GTPase family. CysN/NodQ subfamily. Heterodimer composed of CysD, the smaller subunit, and CysN.

The catalysed reaction is sulfate + ATP + H(+) = adenosine 5'-phosphosulfate + diphosphate. The protein operates within sulfur metabolism; hydrogen sulfide biosynthesis; sulfite from sulfate: step 1/3. Functionally, with CysD forms the ATP sulfurylase (ATPS) that catalyzes the adenylation of sulfate producing adenosine 5'-phosphosulfate (APS) and diphosphate, the first enzymatic step in sulfur assimilation pathway. APS synthesis involves the formation of a high-energy phosphoric-sulfuric acid anhydride bond driven by GTP hydrolysis by CysN coupled to ATP hydrolysis by CysD. This chain is Sulfate adenylyltransferase subunit 1, found in Buchnera aphidicola subsp. Acyrthosiphon pisum (strain APS) (Acyrthosiphon pisum symbiotic bacterium).